Here is a 150-residue protein sequence, read N- to C-terminus: UPF0179 protein Mbur_1033 (150 aa).

It belongs to the UPF0179 family.

The sequence is that of UPF0179 protein Mbur_1033 from Methanococcoides burtonii (strain DSM 6242 / NBRC 107633 / OCM 468 / ACE-M).